The sequence spans 406 residues: Cysteine desulfurase (406 aa).

K226 is modified (N6-(pyridoxal phosphate)lysine). The Cysteine persulfide intermediate role is filled by C364.

This sequence belongs to the class-V pyridoxal-phosphate-dependent aminotransferase family. Csd subfamily. In terms of assembly, homodimer. Interacts with SufE and the SufBCD complex composed of SufB, SufC and SufD. The interaction with SufE is required to mediate the direct transfer of the sulfur atom from the S-sulfanylcysteine. Requires pyridoxal 5'-phosphate as cofactor.

The protein localises to the cytoplasm. It carries out the reaction (sulfur carrier)-H + L-cysteine = (sulfur carrier)-SH + L-alanine. It catalyses the reaction L-selenocysteine + AH2 = hydrogenselenide + L-alanine + A + H(+). Its pathway is cofactor biosynthesis; iron-sulfur cluster biosynthesis. Functionally, cysteine desulfurases mobilize the sulfur from L-cysteine to yield L-alanine, an essential step in sulfur metabolism for biosynthesis of a variety of sulfur-containing biomolecules. Component of the suf operon, which is activated and required under specific conditions such as oxidative stress and iron limitation. Acts as a potent selenocysteine lyase in vitro, that mobilizes selenium from L-selenocysteine. Selenocysteine lyase activity is however unsure in vivo. This is Cysteine desulfurase from Yersinia pestis bv. Antiqua (strain Angola).